Reading from the N-terminus, the 63-residue chain is Large ribosomal subunit protein uL29 (63 aa).

This sequence belongs to the universal ribosomal protein uL29 family.

This is Large ribosomal subunit protein uL29 from Shewanella oneidensis (strain ATCC 700550 / JCM 31522 / CIP 106686 / LMG 19005 / NCIMB 14063 / MR-1).